The sequence spans 563 residues: Putative cysteine ligase BshC (563 aa).

Residues 493–518 adopt a coiled-coil conformation; sequence KEKTYRAGRRKHDELLQQLDKAELNL.

It belongs to the BshC family.

The protein is Putative cysteine ligase BshC of Chlorobaculum tepidum (strain ATCC 49652 / DSM 12025 / NBRC 103806 / TLS) (Chlorobium tepidum).